The following is a 458-amino-acid chain: MVANWVLALTRQFDPFMFMMVMGVGISSNILYSFPYPARWLRICSYIMFAIACLIFIAVQALQILHLIVYIKEKSFREYFNDFFRNMKHNLFWGTYPMGLVTIINFLGALSKANTTKSPTNARNLMIFVYVLWWYDLAVCLVIAWGISFLIWHDYYPLEGIGNYPSYNIKMASENMKSVLLLDIIPLVVVASSCGTFTMSEIFFHAFNRNIQLITLVICALTWLHAIIFVFILIAIYFWSLYINKIPPMTQVFTLFLLLGPMGQGSFGVLLLTDNIKKYAGKYYPTDNITREQEILTIAVPWCFKILGMVSAMALLAMGYFFTVISVVSILSYYNKKEIENETGKVKRVYTFHKGFWGMTFPMGTMSLGNEELYVQYNQYVPLYAFRVLGTIYGGVCVCWSILCLLCTLHEYSKKMLHAARKSSLFSESGTEKTTVSPYNSIESVEESNSALDFTRLA.

Topologically, residues 1–11 (MVANWVLALTR) are cytoplasmic. A helical transmembrane segment spans residues 12–32 (QFDPFMFMMVMGVGISSNILY). The Extracellular portion of the chain corresponds to 33–48 (SFPYPARWLRICSYIM). A helical transmembrane segment spans residues 49 to 69 (FAIACLIFIAVQALQILHLIV). At 70-89 (YIKEKSFREYFNDFFRNMKH) the chain is on the cytoplasmic side. The chain crosses the membrane as a helical span at residues 90–110 (NLFWGTYPMGLVTIINFLGAL). The Extracellular segment spans residues 111–135 (SKANTTKSPTNARNLMIFVYVLWWY). The helical transmembrane segment at 136–156 (DLAVCLVIAWGISFLIWHDYY) threads the bilayer. Topologically, residues 157–176 (PLEGIGNYPSYNIKMASENM) are cytoplasmic. The helical transmembrane segment at 177-197 (KSVLLLDIIPLVVVASSCGTF) threads the bilayer. Topologically, residues 198 to 220 (TMSEIFFHAFNRNIQLITLVICA) are extracellular. Residues 221–241 (LTWLHAIIFVFILIAIYFWSL) traverse the membrane as a helical segment. Residues 242–252 (YINKIPPMTQV) are Cytoplasmic-facing. A helical membrane pass occupies residues 253 to 275 (FTLFLLLGPMGQGSFGVLLLTDN). Over 276 to 309 (IKKYAGKYYPTDNITREQEILTIAVPWCFKILGM) the chain is Extracellular. A helical membrane pass occupies residues 310 to 330 (VSAMALLAMGYFFTVISVVSI). The Cytoplasmic portion of the chain corresponds to 331–350 (LSYYNKKEIENETGKVKRVY). The helical transmembrane segment at 351–371 (TFHKGFWGMTFPMGTMSLGNE) threads the bilayer. At 372-387 (ELYVQYNQYVPLYAFR) the chain is on the extracellular side. A helical transmembrane segment spans residues 388–408 (VLGTIYGGVCVCWSILCLLCT). Over 409-458 (LHEYSKKMLHAARKSSLFSESGTEKTTVSPYNSIESVEESNSALDFTRLA) the chain is Cytoplasmic. Residues Ser-444, Ser-448, and Ser-450 each carry the phosphoserine modification.

Belongs to the tellurite-resistance/dicarboxylate transporter (TDT) family.

Its subcellular location is the cell membrane. Involved in efflux of free sulfite. Mutations in the SSU1 gene cause sensitivity to sulfite. The polypeptide is Sulfite efflux pump SSU1 (SSU1) (Saccharomyces cerevisiae (strain ATCC 204508 / S288c) (Baker's yeast)).